Here is a 225-residue protein sequence, read N- to C-terminus: Rho GDP-dissociation inhibitor 3 (225 aa).

It belongs to the Rho GDI family. In terms of tissue distribution, primarily expressed in pancreas and brain.

The protein localises to the cytoplasm. Its function is as follows. Inhibits GDP/GTP exchange reaction of RhoB. Interacts specifically with the GDP- and GTP-bound forms of post-translationally processed Rhob and Rhog proteins, both of which show a growth-regulated expression in mammalian cells. Stimulates the release of the GDP-bound but not the GTP-bound RhoB protein. Also inhibits the GDP/GTP exchange of RhoB but shows less ability to inhibit the dissociation of prebound GTP. The polypeptide is Rho GDP-dissociation inhibitor 3 (ARHGDIG) (Homo sapiens (Human)).